Reading from the N-terminus, the 700-residue chain is Elongation factor G (700 aa).

Positions 10-286 (KKVRNIGIMA…AVIDYLPSPL (277 aa)) constitute a tr-type G domain. GTP-binding positions include 19-26 (AHIDAGKT), 83-87 (DTPGH), and 137-140 (NKMD).

Belongs to the TRAFAC class translation factor GTPase superfamily. Classic translation factor GTPase family. EF-G/EF-2 subfamily.

It is found in the cytoplasm. Catalyzes the GTP-dependent ribosomal translocation step during translation elongation. During this step, the ribosome changes from the pre-translocational (PRE) to the post-translocational (POST) state as the newly formed A-site-bound peptidyl-tRNA and P-site-bound deacylated tRNA move to the P and E sites, respectively. Catalyzes the coordinated movement of the two tRNA molecules, the mRNA and conformational changes in the ribosome. The chain is Elongation factor G from Nocardia farcinica (strain IFM 10152).